The primary structure comprises 399 residues: MAPKTKSRLVDQPPSASSSEEQELVEESQEEEEQQSREEEGEEESGEETEEDEEPKTAHPVVKKPISQKLVQTPQKPQFSSESGSENGSGSDSEAESGNSLPSPSASDFTVKPNVAAKAATPSKPAAKRPQEAQKEKGKKKPKIAEEEEKKSPATPRSLWSDDDQLALLKGILEYKTVKGMEPSADMSAFHEFIRGKLQAEVSKSQISDKVRRLKKKFLTNVKDGEEPVFKKGQDFLIFEHSKRIWGAPGISNGGVKDNVNNTSNGKAKKTVEVKKSSEPKKSAKVSKPKDDEKQKEEEQQVAVKEVVKEDIVKGDQQDFQSKYPRLAASLETMSGLSTMYPNGSSLLKENMSLIATDKAKVLEEKWKKLEDDEAALMVKRLDFIAEHYRLVVDAMRGN.

Disordered stretches follow at residues 1 to 160 (MAPK…RSLW) and 250 to 301 (GISN…EEQQ). A compositionally biased stretch (acidic residues) spans 20–54 (EEQELVEESQEEEEQQSREEEGEEESGEETEEDEE). Residues 69 to 79 (KLVQTPQKPQF) show a composition bias toward polar residues. 2 stretches are compositionally biased toward low complexity: residues 80 to 100 (SSESGSENGSGSDSEAESGNS) and 116 to 125 (AAKAATPSKP). Composition is skewed to basic and acidic residues over residues 143–152 (KIAEEEEKKS) and 270–299 (KTVEVKKSSEPKKSAKVSKPKDDEKQKEEE).

Belongs to the GeBP family. As to expression, expressed in tubers and in leaves treated with sucrose.

Its subcellular location is the nucleus. Its function is as follows. May act as a transcriptional regulator. Binds specifically to the B-box motif, a promoter element that is required for the tuber-specific and sucrose inducible expression of the patatin gene. The protein is STOREKEEPER protein of Solanum tuberosum (Potato).